We begin with the raw amino-acid sequence, 264 residues long: Apolipoprotein A-I (264 aa).

Positions 1-18 (MKAVVLTVAVLFLTGSQA) are cleaved as a signal peptide. 2 repeat units span residues 67–88 (LKLLDNWDTLGSSISKLREQLG) and 89–110 (PVTQEFWDNLEKDTEWLRQEMN). Residues 67–264 (LKLLDNWDTL…DDAAKKLSSQ (198 aa)) are 10 X approximate tandem repeats. At Met109 the chain carries Methionine sulfoxide. A 3; half-length repeat occupies 111–121 (KDLEEVKQKVQ). Tandem repeats lie at residues 122–143 (PYLEEFQKKWQEEVERYRQKVE), 144–165 (PLSTELREGARQKLQELQEKLT), and 166–187 (PLGEELRDHARTHVDVLRTQLA). A 7; truncated repeat occupies 188–207 (PYSDKMRERLAERLTALKDS). Methionine sulfoxide is present on Met193. The stretch at 208 to 229 (ASFAEYHAKASEHLKTLREKAK) is repeat 8. One copy of the 9; half-length repeat lies at 230–240 (PAIEDLGQGLL). Residues 241 to 264 (PVLENLKASFLSAIDDAAKKLSSQ) form repeat 10.

The protein belongs to the apolipoprotein A1/A4/E family. Homodimer. Interacts with APOA1BP and CLU. Component of a sperm activating protein complex (SPAP), consisting of APOA1, an immunoglobulin heavy chain, an immunoglobulin light chain and albumin. Interacts with NDRG1. Interacts with SCGB3A2. Interacts with NAXE and YJEFN3. Post-translationally, glycosylated. In terms of processing, palmitoylated. Phosphorylation sites are present in the extracellular medium.

It is found in the secreted. In terms of biological role, participates in the reverse transport of cholesterol from tissues to the liver for excretion by promoting cholesterol efflux from tissues and by acting as a cofactor for the lecithin cholesterol acyltransferase (LCAT). As part of the SPAP complex, activates spermatozoa motility. In Castor canadensis (American beaver), this protein is Apolipoprotein A-I (APOA1).